The chain runs to 108 residues: Ig kappa chain V-VI region NQ2-6.1 (108 aa).

Residues 1-23 (QILLTQSPAIMSASPGQKVTMTC) are framework-1. Cys23 and Cys87 form a disulfide bridge. The tract at residues 24–33 (SASSSVSYMY) is complementarity-determining-1. The framework-2 stretch occupies residues 34 to 48 (WYQQKPGSSPRLLIY). A complementarity-determining-2 region spans residues 49–55 (DTSNLAS). The framework-3 stretch occupies residues 56–87 (GVPVRFSGSGSATSYSLTITRMQAEDAATYYC). Residues 88–98 (QQWSSYPPMLT) are complementarity-determining-3. Residues 99-108 (FGAGTKLELK) are framework-4.

This is Ig kappa chain V-VI region NQ2-6.1 from Mus musculus (Mouse).